Consider the following 125-residue polypeptide: Large-conductance mechanosensitive channel (125 aa).

2 helical membrane-spanning segments follow: residues 15–35 and 67–87; these read MDLA…NSLV and GSFL…FFLI.

This sequence belongs to the MscL family. In terms of assembly, homopentamer.

Its subcellular location is the cell membrane. In terms of biological role, channel that opens in response to stretch forces in the membrane lipid bilayer. May participate in the regulation of osmotic pressure changes within the cell. This chain is Large-conductance mechanosensitive channel, found in Lactobacillus gasseri (strain ATCC 33323 / DSM 20243 / BCRC 14619 / CIP 102991 / JCM 1131 / KCTC 3163 / NCIMB 11718 / NCTC 13722 / AM63).